A 501-amino-acid chain; its full sequence is Alveolysin (501 aa).

The signal sequence occupies residues 1 to 32; sequence MKKKSNHLKGRKVLVSLLVSLQVFAFASISSA. Beta stranded transmembrane passes span 191–204, 211–220, 289–298, and 306–318; these read QNQI…NAKV, IDFNAVANGE, SNDVQTAFKL, and QASG…YENS. Positions 460-470 match the Conserved undecapeptide motif; the sequence is ECTGLAWEWWR. Positions 492–493 match the Cholesterol binding motif; it reads TL.

It belongs to the cholesterol-dependent cytolysin family. In terms of assembly, homooligomeric pore complex of 35 to 50 subunits; when inserted in the host membrane.

It is found in the secreted. The protein resides in the host cell membrane. Inhibited by cholesterol and thiol reagents. A cholesterol-dependent toxin that causes cytolysis by forming pores in cholesterol containing host membranes. After binding to target membranes, the protein undergoes a major conformation change, leading to its insertion in the host membrane and formation of an oligomeric pore complex. Cholesterol is required for binding to host cell membranes, membrane insertion and pore formation; cholesterol binding is mediated by a Thr-Leu pair in the C-terminus. Can be reversibly inactivated by oxidation. The sequence is that of Alveolysin (alv) from Paenibacillus alvei (Bacillus alvei).